We begin with the raw amino-acid sequence, 540 residues long: DEAD-box ATP-dependent RNA helicase 57 (540 aa).

Residues 24–73 (DFARFRQGPPAPDVASAAAPSPEKKRKRQSKAKAKKSKKRRAEGADSASD) are disordered. Residues 47–64 (KKRKRQSKAKAKKSKKRR) are compositionally biased toward basic residues. Positions 101-129 (KSEDSEVVRRRKEVEREIERAAILRKKFD) form a coiled coil. A Q motif motif is present at residues 146–174 (ELVSRYGCDSYLVGNLSKLGFQEPTPIQR). Residues 177-347 (IPILLSGREC…RTIMHDAVRV (171 aa)) form the Helicase ATP-binding domain. Position 190–197 (190–197 (APTGSGKT)) interacts with ATP. A DEAD box motif is present at residues 294–297 (DESD). The 145-residue stretch at 375 to 519 (ALRQSFAESL…EVPSWIKALP (145 aa)) folds into the Helicase C-terminal domain.

This sequence belongs to the DEAD box helicase family. DDX52/ROK1 subfamily.

The catalysed reaction is ATP + H2O = ADP + phosphate + H(+). This chain is DEAD-box ATP-dependent RNA helicase 57, found in Oryza sativa subsp. japonica (Rice).